The chain runs to 141 residues: Ribonuclease P protein component (141 aa).

Basic and acidic residues predominate over residues 114–134 (RRIKAKGERRGDGKRRTERPE). The segment at 114-141 (RRIKAKGERRGDGKRRTERPESGPVNGK) is disordered.

This sequence belongs to the RnpA family. Consists of a catalytic RNA component (M1 or rnpB) and a protein subunit.

It carries out the reaction Endonucleolytic cleavage of RNA, removing 5'-extranucleotides from tRNA precursor.. RNaseP catalyzes the removal of the 5'-leader sequence from pre-tRNA to produce the mature 5'-terminus. It can also cleave other RNA substrates such as 4.5S RNA. The protein component plays an auxiliary but essential role in vivo by binding to the 5'-leader sequence and broadening the substrate specificity of the ribozyme. The sequence is that of Ribonuclease P protein component from Brucella anthropi (strain ATCC 49188 / DSM 6882 / CCUG 24695 / JCM 21032 / LMG 3331 / NBRC 15819 / NCTC 12168 / Alc 37) (Ochrobactrum anthropi).